Consider the following 384-residue polypeptide: S-adenosylmethionine synthase (384 aa).

H15 is a binding site for ATP. A Mg(2+)-binding site is contributed by D17. K(+) is bound at residue E43. L-methionine-binding residues include E56 and Q99. Positions 99-109 (QSPDINQGVDR) are flexible loop. ATP is bound by residues 164–166 (DAK), 230–231 (RF), D239, 245–246 (RK), A262, and K266. D239 is a binding site for L-methionine. K270 contributes to the L-methionine binding site.

Belongs to the AdoMet synthase family. Homotetramer; dimer of dimers. It depends on Mg(2+) as a cofactor. K(+) is required as a cofactor.

It localises to the cytoplasm. The enzyme catalyses L-methionine + ATP + H2O = S-adenosyl-L-methionine + phosphate + diphosphate. Its pathway is amino-acid biosynthesis; S-adenosyl-L-methionine biosynthesis; S-adenosyl-L-methionine from L-methionine: step 1/1. Functionally, catalyzes the formation of S-adenosylmethionine (AdoMet) from methionine and ATP. The overall synthetic reaction is composed of two sequential steps, AdoMet formation and the subsequent tripolyphosphate hydrolysis which occurs prior to release of AdoMet from the enzyme. The protein is S-adenosylmethionine synthase of Klebsiella pneumoniae subsp. pneumoniae (strain ATCC 700721 / MGH 78578).